The chain runs to 84 residues: Cell division topological specificity factor (84 aa).

This sequence belongs to the MinE family.

Its function is as follows. Prevents the cell division inhibition by proteins MinC and MinD at internal division sites while permitting inhibition at polar sites. This ensures cell division at the proper site by restricting the formation of a division septum at the midpoint of the long axis of the cell. In Pseudomonas fluorescens (strain Pf0-1), this protein is Cell division topological specificity factor.